A 119-amino-acid polypeptide reads, in one-letter code: Large ribosomal subunit protein bL17 (119 aa).

The protein belongs to the bacterial ribosomal protein bL17 family. As to quaternary structure, part of the 50S ribosomal subunit. Contacts protein L32.

The protein is Large ribosomal subunit protein bL17 of Acholeplasma laidlawii (strain PG-8A).